Reading from the N-terminus, the 260-residue chain is MSFKRDGDDSSQLNVLKKRRVADLLASYIPEDEALLLKNGSYACTVCHHRPVFNTIDMLSVHRTGKKHLGGLQRYYGKKLEHKNEIQKRRHFDFVRAEDAGEKPPPGPAPLLVQTKRITQNALLKSAPYNSCCSNKKVVANSRNVYDPHSGPSTTTGLNVPLDTQPGPSQPHTSLHSPPTGPCSSPTDEIPPNKNNSRHKKKGEEKFRKEIADPERERNMEHYLQLKSSGWIPDGTGKWVKDENVEFDSDEEEPPALPPS.

The Bipartite nuclear localization signal motif lies at 4–20 (KRDGDDSSQLNVLKKRR). Residues 42–74 (YACTVCHHRPVFNTIDMLSVHRTGKKHLGGLQR) form a Matrin-type zinc finger. A disordered region spans residues 143–260 (RNVYDPHSGP…EEEPPALPPS (118 aa)). Polar residues predominate over residues 166-187 (PGPSQPHTSLHSPPTGPCSSPT). Basic and acidic residues predominate over residues 202–221 (KGEEKFRKEIADPERERNME). The span at 245–254 (VEFDSDEEEP) shows a compositional bias: acidic residues.

As to quaternary structure, component of the minor spliceosome, which splices U12-type introns.

Its subcellular location is the nucleus. The protein localises to the nucleoplasm. The protein resides in the nucleus speckle. In terms of biological role, as a component of the minor spliceosome, involved in the splicing of U12-type introns in pre-mRNAs. In Xenopus laevis (African clawed frog), this protein is Sodium channel modifier 1 (scnm1).